The sequence spans 215 residues: Pyrrolidone-carboxylate peptidase (215 aa).

Residues glutamate 80, cysteine 143, and histidine 167 contribute to the active site.

Belongs to the peptidase C15 family. Homotetramer.

The protein localises to the cytoplasm. It carries out the reaction Release of an N-terminal pyroglutamyl group from a polypeptide, the second amino acid generally not being Pro.. Removes 5-oxoproline from various penultimate amino acid residues except L-proline. The chain is Pyrrolidone-carboxylate peptidase from Bacillus cereus (strain Q1).